The following is a 302-amino-acid chain: 33 kDa chaperonin (302 aa).

Cystine bridges form between Cys255–Cys257 and Cys288–Cys291.

It belongs to the HSP33 family. In terms of processing, under oxidizing conditions two disulfide bonds are formed involving the reactive cysteines. Under reducing conditions zinc is bound to the reactive cysteines and the protein is inactive.

It localises to the cytoplasm. Functionally, redox regulated molecular chaperone. Protects both thermally unfolding and oxidatively damaged proteins from irreversible aggregation. Plays an important role in the bacterial defense system toward oxidative stress. The chain is 33 kDa chaperonin from Caulobacter vibrioides (strain ATCC 19089 / CIP 103742 / CB 15) (Caulobacter crescentus).